The chain runs to 151 residues: Large ribosomal subunit protein uL22 (151 aa).

A compositionally biased stretch (polar residues) spans 1–18 (MARINYSINGDPETTSKA). A disordered region spans residues 1-23 (MARINYSINGDPETTSKAMGSEL).

This sequence belongs to the universal ribosomal protein uL22 family. Part of the 50S ribosomal subunit.

Its function is as follows. This protein binds specifically to 23S rRNA. It makes multiple contacts with different domains of the 23S rRNA in the assembled 50S subunit and ribosome. In terms of biological role, the globular domain of the protein is located near the polypeptide exit tunnel on the outside of the subunit, while an extended beta-hairpin is found that lines the wall of the exit tunnel in the center of the 70S ribosome. This is Large ribosomal subunit protein uL22 from Methanosarcina acetivorans (strain ATCC 35395 / DSM 2834 / JCM 12185 / C2A).